Here is a 237-residue protein sequence, read N- to C-terminus: tRNA (guanine-N(7)-)-methyltransferase (237 aa).

Positions 65, 90, 117, and 140 each coordinate S-adenosyl-L-methionine. Asp-140 is an active-site residue. Substrate is bound by residues Lys-144, Asp-176, and 212–215 (TKFE). The disordered stretch occupies residues 197–217 (TCGPRQFSPRGERPETKFERR). Basic and acidic residues predominate over residues 206–217 (RGERPETKFERR).

This sequence belongs to the class I-like SAM-binding methyltransferase superfamily. TrmB family.

It carries out the reaction guanosine(46) in tRNA + S-adenosyl-L-methionine = N(7)-methylguanosine(46) in tRNA + S-adenosyl-L-homocysteine. Its pathway is tRNA modification; N(7)-methylguanine-tRNA biosynthesis. Its function is as follows. Catalyzes the formation of N(7)-methylguanine at position 46 (m7G46) in tRNA. This chain is tRNA (guanine-N(7)-)-methyltransferase, found in Alkalilimnicola ehrlichii (strain ATCC BAA-1101 / DSM 17681 / MLHE-1).